The primary structure comprises 417 residues: Serine hydroxymethyltransferase 2 (417 aa).

(6S)-5,6,7,8-tetrahydrofolate contacts are provided by residues Leu-121 and 125–127; that span reads GHL. Lys-230 bears the N6-(pyridoxal phosphate)lysine mark. 355–357 is a (6S)-5,6,7,8-tetrahydrofolate binding site; that stretch reads SPF.

The protein belongs to the SHMT family. Homodimer. Requires pyridoxal 5'-phosphate as cofactor.

The protein resides in the cytoplasm. The catalysed reaction is (6R)-5,10-methylene-5,6,7,8-tetrahydrofolate + glycine + H2O = (6S)-5,6,7,8-tetrahydrofolate + L-serine. The protein operates within one-carbon metabolism; tetrahydrofolate interconversion. Its pathway is amino-acid biosynthesis; glycine biosynthesis; glycine from L-serine: step 1/1. Its function is as follows. Catalyzes the reversible interconversion of serine and glycine with tetrahydrofolate (THF) serving as the one-carbon carrier. This reaction serves as the major source of one-carbon groups required for the biosynthesis of purines, thymidylate, methionine, and other important biomolecules. Also exhibits THF-independent aldolase activity toward beta-hydroxyamino acids, producing glycine and aldehydes, via a retro-aldol mechanism. This is Serine hydroxymethyltransferase 2 from Pseudomonas syringae pv. syringae (strain B728a).